We begin with the raw amino-acid sequence, 335 residues long: DNA polymerase beta (335 aa).

Residue Lys41 forms a Glycyl lysine isopeptide (Lys-Gly) (interchain with G-Cter in ubiquitin) linkage. Lys60 provides a ligand contact to K(+). Lys60 contacts Na(+). Lys61 is covalently cross-linked (Glycyl lysine isopeptide (Lys-Gly) (interchain with G-Cter in ubiquitin)). K(+) contacts are provided by Leu62 and Val65. Residues Leu62 and Val65 each contribute to the Na(+) site. Lys72 acts as the Nucleophile; Schiff-base intermediate with DNA; for 5'-dRP lyase activity in catalysis. Lys72 is subject to N6-acetyllysine. A Glycyl lysine isopeptide (Lys-Gly) (interchain with G-Cter in ubiquitin) cross-link involves residue Lys81. The residue at position 83 (Arg83) is an Omega-N-methylarginine; by PRMT6. Thr101, Val103, and Ile106 together coordinate K(+). Residues Thr101, Val103, and Ile106 each coordinate Na(+). Residue Arg149 participates in a 2'-deoxyribonucleoside 5'-triphosphate binding. Arg152 is subject to Omega-N-methylarginine; by PRMT6. Positions 180, 183, 189, and 190 each coordinate a 2'-deoxyribonucleoside 5'-triphosphate. The DNA-binding stretch occupies residues 183–192 (RGAESSGDMD). Asp190, Asp192, and Asp256 together coordinate Mg(2+).

Belongs to the DNA polymerase type-X family. As to quaternary structure, monomer. Binds single-stranded DNA (ssDNA). Interacts with APEX1, LIG1, LIG3, FEN1, PCNA and XRCC1. Interacts with HUWE1/ARF-BP1, STUB1/CHIP and USP47. Interacts with FAM168A. The cofactor is Mg(2+). Methylation by PRMT6 stimulates the polymerase activity by enhancing DNA binding and processivity. In terms of processing, ubiquitinated at Lys-41, Lys-61 and Lys-81: monoubiquitinated by HUWE1/ARF-BP1. Monoubiquitinated protein is then the target of STUB1/CHIP, which catalyzes polyubiquitination from monoubiquitin, leading to degradation by the proteasome. USP47 mediates the deubiquitination of monoubiquitinated protein, preventing polyubiquitination by STUB1/CHIP and its subsequent degradation.

It localises to the nucleus. The protein resides in the cytoplasm. The enzyme catalyses DNA(n) + a 2'-deoxyribonucleoside 5'-triphosphate = DNA(n+1) + diphosphate. The catalysed reaction is a 5'-end 2'-deoxyribose-2'-deoxyribonucleotide-DNA = (2E,4S)-4-hydroxypenten-2-al-5-phosphate + a 5'-end 5'-phospho-2'-deoxyribonucleoside-DNA + H(+). It carries out the reaction 2'-deoxyribonucleotide-(2'-deoxyribose 5'-phosphate)-2'-deoxyribonucleotide-DNA = a 3'-end 2'-deoxyribonucleotide-(2,3-dehydro-2,3-deoxyribose 5'-phosphate)-DNA + a 5'-end 5'-phospho-2'-deoxyribonucleoside-DNA + H(+). Its function is as follows. Repair polymerase that plays a key role in base-excision repair. During this process, the damaged base is excised by specific DNA glycosylases, the DNA backbone is nicked at the abasic site by an apurinic/apyrimidic (AP) endonuclease, and POLB removes 5'-deoxyribose-phosphate from the preincised AP site acting as a 5'-deoxyribose-phosphate lyase (5'-dRP lyase); through its DNA polymerase activity, it adds one nucleotide to the 3' end of the arising single-nucleotide gap. Conducts 'gap-filling' DNA synthesis in a stepwise distributive fashion rather than in a processive fashion as for other DNA polymerases. It is also able to cleave sugar-phosphate bonds 3' to an intact AP site, acting as an AP lyase. In Mus musculus (Mouse), this protein is DNA polymerase beta (Polb).